Here is a 357-residue protein sequence, read N- to C-terminus: D-alanine--D-alanine ligase (357 aa).

The 206-residue stretch at 134–339 (KQLFEHRGLP…YPDLIAKLID (206 aa)) folds into the ATP-grasp domain. 167–222 (NDKLTYPVFVKPANLGSSVGISKCNNEEELKSGITEAFQFDRKLVIEQGINAREIE) serves as a coordination point for ATP. 3 residues coordinate Mg(2+): Asp293, Glu306, and Asn308.

Belongs to the D-alanine--D-alanine ligase family. Requires Mg(2+) as cofactor. Mn(2+) serves as cofactor.

The protein resides in the cytoplasm. It carries out the reaction 2 D-alanine + ATP = D-alanyl-D-alanine + ADP + phosphate + H(+). It participates in cell wall biogenesis; peptidoglycan biosynthesis. In terms of biological role, cell wall formation. This Staphylococcus epidermidis (strain ATCC 12228 / FDA PCI 1200) protein is D-alanine--D-alanine ligase.